Here is a 625-residue protein sequence, read N- to C-terminus: DNA-directed RNA polymerase subunit gamma (625 aa).

Zn(2+) is bound by residues Cys71, Cys73, Cys86, and Cys89. Residues Asp467, Asp469, and Asp471 each contribute to the Mg(2+) site.

It belongs to the RNA polymerase beta' chain family. RpoC1 subfamily. In terms of assembly, in cyanobacteria the RNAP catalytic core is composed of 2 alpha, 1 beta, 1 beta', 1 gamma and 1 omega subunit. When a sigma factor is associated with the core the holoenzyme is formed, which can initiate transcription. The cofactor is Mg(2+). Zn(2+) is required as a cofactor.

The enzyme catalyses RNA(n) + a ribonucleoside 5'-triphosphate = RNA(n+1) + diphosphate. In terms of biological role, DNA-dependent RNA polymerase catalyzes the transcription of DNA into RNA using the four ribonucleoside triphosphates as substrates. In Rippkaea orientalis (strain PCC 8801 / RF-1) (Cyanothece sp. (strain PCC 8801)), this protein is DNA-directed RNA polymerase subunit gamma.